A 437-amino-acid chain; its full sequence is Septin-7 (437 aa).

S2 is modified (N-acetylserine). Y30 carries the post-translational modification Phosphotyrosine. Residues 47–316 (RGFEFTLMVV…ENYRSRKLAA (270 aa)) enclose the Septin-type G domain. The interaction with SEPTIN12 stretch occupies residues 47–317 (RGFEFTLMVV…NYRSRKLAAV (271 aa)). The tract at residues 57-64 (GESGLGKS) is G1 motif. A GTP-binding site is contributed by 57–64 (GESGLGKS). S77 is modified (phosphoserine). GTP is bound by residues T90, G116, and 195–203 (KADTLTPEE). The tract at residues 113 to 116 (DTPG) is G3 motif. Positions 194-197 (AKAD) are G4 motif. The residue at position 228 (T228) is a Phosphothreonine. Residues G250 and R265 each coordinate GTP. Residues 332–433 (TKSPLAQMEE…SRTLEKNKKK (102 aa)) adopt a coiled-coil conformation. S334 is modified (phosphoserine). K373 is subject to N6-acetyllysine. Over residues 378 to 410 (ELQRRHEQMKKNLEAQHKELEEKRRQFEDEKAN) the composition is skewed to basic and acidic residues. The disordered stretch occupies residues 378–437 (ELQRRHEQMKKNLEAQHKELEEKRRQFEDEKANWEAQQRILEQQNSSRTLEKNKKKGKIF). Phosphoserine is present on S424. T426 is modified (phosphothreonine).

This sequence belongs to the TRAFAC class TrmE-Era-EngA-EngB-Septin-like GTPase superfamily. Septin GTPase family. In terms of assembly, septins polymerize into heterooligomeric protein complexes that form filaments, and associate with cellular membranes, actin filaments and microtubules. GTPase activity is required for filament formation. Filaments are assembled from asymmetrical heterotrimers, composed of SEPTIN2, SEPTIN6 and SEPTIN7 that associate head-to-head to form a hexameric unit. Within the trimer, directly interacts with SEPTIN6, while interaction with SEPTIN2 seems indirect. In the absence of SEPTIN6, forms homodimers. Interacts directly with CENPE and links CENPE to septin filaments composed of SEPTIN2, SEPTIN6 and SEPTIN7. Interacts with SEPTIN5, SEPTIN8, SEPTIN9 and SEPTIN11. Component of a septin core octameric complex consisting of SEPTIN12, SEPTIN7, SEPTIN6 and SEPTIN2 or SEPTIN4 in the order 12-7-6-2-2-6-7-12 or 12-7-6-4-4-6-7-12 and located in the sperm annulus; the SEPTIN12:SEPTIN7 association is mediated by the respective GTP-binding domains.

The protein resides in the cytoplasm. Its subcellular location is the chromosome. The protein localises to the centromere. It is found in the kinetochore. It localises to the cytoskeleton. The protein resides in the spindle. Its subcellular location is the cleavage furrow. The protein localises to the midbody. It is found in the cilium axoneme. It localises to the cell projection. The protein resides in the cilium. Its subcellular location is the flagellum. In terms of biological role, filament-forming cytoskeletal GTPase. Required for normal organization of the actin cytoskeleton. Required for normal progress through mitosis. Involved in cytokinesis. Required for normal association of CENPE with the kinetochore. Plays a role in ciliogenesis and collective cell movements. Forms a filamentous structure with SEPTIN12, SEPTIN6, SEPTIN2 and probably SEPTIN4 at the sperm annulus which is required for the structural integrity and motility of the sperm tail during postmeiotic differentiation. The polypeptide is Septin-7 (Bos taurus (Bovine)).